The following is a 312-amino-acid chain: DNA-directed RNA polymerase subunit alpha (312 aa).

Positions 1–229 (MLQYQIDRVD…ALFQPLATVT (229 aa)) are alpha N-terminal domain (alpha-NTD). The alpha C-terminal domain (alpha-CTD) stretch occupies residues 241-312 (SAESQIPLEE…ISLPQSRTTA (72 aa)).

Belongs to the RNA polymerase alpha chain family. In cyanobacteria the RNAP catalytic core is composed of 2 alpha, 1 beta, 1 beta', 1 gamma and 1 omega subunit. When a sigma factor is associated with the core the holoenzyme is formed, which can initiate transcription.

The enzyme catalyses RNA(n) + a ribonucleoside 5'-triphosphate = RNA(n+1) + diphosphate. In terms of biological role, DNA-dependent RNA polymerase catalyzes the transcription of DNA into RNA using the four ribonucleoside triphosphates as substrates. In Synechococcus sp. (strain RCC307), this protein is DNA-directed RNA polymerase subunit alpha.